Consider the following 418-residue polypeptide: Serine--tRNA ligase (418 aa).

Threonine 231–glutamate 233 provides a ligand contact to L-serine. Arginine 262–glutamate 264 is an ATP binding site. Residue glutamate 285 participates in L-serine binding. Glutamate 349–serine 352 provides a ligand contact to ATP. Serine 385 is an L-serine binding site.

It belongs to the class-II aminoacyl-tRNA synthetase family. Type-1 seryl-tRNA synthetase subfamily. As to quaternary structure, homodimer. The tRNA molecule binds across the dimer.

The protein resides in the cytoplasm. It catalyses the reaction tRNA(Ser) + L-serine + ATP = L-seryl-tRNA(Ser) + AMP + diphosphate + H(+). It carries out the reaction tRNA(Sec) + L-serine + ATP = L-seryl-tRNA(Sec) + AMP + diphosphate + H(+). It functions in the pathway aminoacyl-tRNA biosynthesis; selenocysteinyl-tRNA(Sec) biosynthesis; L-seryl-tRNA(Sec) from L-serine and tRNA(Sec): step 1/1. In terms of biological role, catalyzes the attachment of serine to tRNA(Ser). Is also able to aminoacylate tRNA(Sec) with serine, to form the misacylated tRNA L-seryl-tRNA(Sec), which will be further converted into selenocysteinyl-tRNA(Sec). The protein is Serine--tRNA ligase of Ureaplasma parvum serovar 3 (strain ATCC 27815 / 27 / NCTC 11736).